A 197-amino-acid polypeptide reads, in one-letter code: MKISKEITIFIVFLTLVVLLGLFTNPLSDIRTPANNELKVGGMNIRFEDGASESEVKAVLENHNMTTNYSIDCNTGSVGNKYYIMVDKDNLDIRRELRKGMEKENKDWIISSSATGIRKGDSYVIAVSEQAVNDEKFLSILNKYDTKVKKFVWCYISFEKPDGSRYWIPEEDAVKMKNELENNESIFTVSIDYINDQ.

This sequence belongs to the UPF0228 family.

This is UPF0228 protein MA_3125 from Methanosarcina acetivorans (strain ATCC 35395 / DSM 2834 / JCM 12185 / C2A).